A 437-amino-acid chain; its full sequence is 3-ketoacyl-CoA thiolase (437 aa).

Residue C99 is the Acyl-thioester intermediate of the active site. Catalysis depends on proton acceptor residues H392 and C422.

This sequence belongs to the thiolase-like superfamily. Thiolase family. Heterotetramer of two alpha chains (FadJ) and two beta chains (FadI).

The protein localises to the cytoplasm. The catalysed reaction is an acyl-CoA + acetyl-CoA = a 3-oxoacyl-CoA + CoA. The protein operates within lipid metabolism; fatty acid beta-oxidation. In terms of biological role, catalyzes the final step of fatty acid oxidation in which acetyl-CoA is released and the CoA ester of a fatty acid two carbons shorter is formed. The polypeptide is 3-ketoacyl-CoA thiolase (Pectobacterium atrosepticum (strain SCRI 1043 / ATCC BAA-672) (Erwinia carotovora subsp. atroseptica)).